The primary structure comprises 862 residues: FAS1 domain-containing protein YLR001C (862 aa).

Positions 1 to 23 are cleaved as a signal peptide; that stretch reads MNMAIQTIKYIFWLLPILGLTQA. At 24 to 762 the chain is on the vacuolar side; that stretch reads LLQNPGDDFP…KYHLRLPGIA (739 aa). The FAS1 1 domain occupies 34 to 162; it reads FSTVIDILSE…ASLQGINNLL (129 aa). Residues Asn68, Asn112, Asn152, Asn200, Asn291, Asn333, Asn450, Asn521, Asn542, Asn569, Asn663, Asn679, and Asn688 are each glycosylated (N-linked (GlcNAc...) asparagine). 2 FAS1 domains span residues 463–604 and 606–744; these read PGDL…DQLD and PVDL…DKPI. The chain crosses the membrane as a helical span at residues 763–783; sequence VGFGVIIGVTIAISLLFCIII. Over 784 to 862 the chain is Cytoplasmic; it reads TRGGKVKDKN…QKGGRSVSTS (79 aa).

The protein localises to the vacuole membrane. The polypeptide is FAS1 domain-containing protein YLR001C (Saccharomyces cerevisiae (strain ATCC 204508 / S288c) (Baker's yeast)).